The chain runs to 66 residues: Large ribosomal subunit protein uL30 (66 aa).

The protein belongs to the universal ribosomal protein uL30 family. In terms of assembly, part of the 50S ribosomal subunit.

The sequence is that of Large ribosomal subunit protein uL30 from Azorhizobium caulinodans (strain ATCC 43989 / DSM 5975 / JCM 20966 / LMG 6465 / NBRC 14845 / NCIMB 13405 / ORS 571).